The primary structure comprises 216 residues: DNA replication complex GINS protein psf1 (216 aa).

The tract at residues 110-133 (QTTGGPKGVTEGNEGGGTTSSLSP) is disordered. Positions 111–127 (TTGGPKGVTEGNEGGGT) are enriched in gly residues.

This sequence belongs to the GINS1/PSF1 family. As to quaternary structure, component of the GINS complex which is a heterotetramer of div-26/sld5, drc-1/psf1, drc-2/psf2 and drc-3/psf3.

It is found in the nucleus. Functionally, the GINS complex plays an essential role in the initiation of DNA replication. This is DNA replication complex GINS protein psf1 (drc-1) from Neurospora crassa (strain ATCC 24698 / 74-OR23-1A / CBS 708.71 / DSM 1257 / FGSC 987).